Here is a 142-residue protein sequence, read N- to C-terminus: FAD synthase (142 aa).

ATP-binding positions include V9 to F10, H14 to H17, D93, and Y120.

Belongs to the archaeal FAD synthase family. In terms of assembly, homodimer. It depends on a divalent metal cation as a cofactor.

It catalyses the reaction FMN + ATP + H(+) = FAD + diphosphate. It functions in the pathway cofactor biosynthesis; FAD biosynthesis; FAD from FMN: step 1/1. Catalyzes the transfer of the AMP portion of ATP to flavin mononucleotide (FMN) to produce flavin adenine dinucleotide (FAD) coenzyme. This is FAD synthase from Thermoplasma acidophilum (strain ATCC 25905 / DSM 1728 / JCM 9062 / NBRC 15155 / AMRC-C165).